Consider the following 87-residue polypeptide: Candoxin (87 aa).

Positions 1–21 (MKTLLLTLVVVTIVCLDLGYT) are cleaved as a signal peptide. Disulfide bonds link cysteine 24/cysteine 47, cysteine 27/cysteine 32, cysteine 40/cysteine 64, cysteine 68/cysteine 80, and cysteine 81/cysteine 86.

As to expression, expressed by the venom gland.

The protein resides in the secreted. Its function is as follows. Binds and inhibits muscular and neuronal nicotinic acetylcholine receptors (nAChR). Is a reversible antagonist of muscle nAChR (alpha-1-beta-1-delta-epsilon/CHRNA1-CHRNB1-CHRND-CHRNE) (IC(50)=10 nM) and a potent and poorly reversible antagonist of the neuronal alpha-7/CHRNA7 nAChR (IC(50)=50 nM). May exhibit differential affinities for the two binding sites on the muscle nAChR. This is Candoxin from Bungarus candidus (Malayan krait).